Consider the following 20-residue polypeptide: Chrysophsin-3 (20 aa).

His-20 is modified (histidine amide).

Gill.

The protein resides in the secreted. Functionally, has antibacterial activity against Gram-positive bacteria B.subtilis ATCC 6633, L.garvieae ATCC 49156 and S.iniae F-8502, and Gram-negative bacteria E.coli WT-2, V.anguillarum ATCC 19264, V.penaeicida KHA, V.harveyi ATCC 14126, V.vulnificus ATCC 33148, A.salmonicida NCMB 1102 and P.putida ATCC 12633. Has hemolytic activity against human red blood cells. Seems to disrupt the membranes by adopting an alpha helical conformation. May play a significant role in innate host defense. This is Chrysophsin-3 from Pagrus major (Red sea bream).